Reading from the N-terminus, the 230-residue chain is uncharacterized protein (230 aa).

The 68-residue stretch at 2 to 69 (HRLAKIISNA…KPRLWIYYKP (68 aa)) folds into the S4 RNA-binding domain. Asp-102 functions as the Nucleophile in the catalytic mechanism.

It belongs to the pseudouridine synthase RsuA family.

The enzyme catalyses a uridine in RNA = a pseudouridine in RNA. This is an uncharacterized protein from Rickettsia conorii (strain ATCC VR-613 / Malish 7).